The sequence spans 358 residues: MEIAALVSGGVDSSVVVHQLKEAGYDPTIFYIRIGMEDKDGYIDCPAEEDIEITSYIARKYGCRFEIVSLHDEYWDRVVSYTIESVKRGLTPNPDMMCNKYIKFGCFEEKWGKDFDKIATGHYATTTEIDGKTWLSTAKDPVKDQTDFLGQITRLQIQKLMFPIGHLMKSEVRAIAEAQKLPSAKRKDSQGICFLGKINYNDFIERYLGKRPGKIVELETGKVLGKHNGYWFHTIGQRKGLGLSGGPWFVIQKDIKRNIIYVSNGYDPETQYGKVINMQGFDFITEDPWGEFEGEKEITFKIRHTPEFTHGYIRRIGDLYRVESDEKIQGIAPGQYSVIYDKDHHLCLGSGMIIDETK.

Residues 6–13 (LVSGGVDS) and isoleucine 32 each bind ATP. Positions 93-95 (NPD) are interaction with target base in tRNA. Cysteine 98 (nucleophile) is an active-site residue. An intrachain disulfide couples cysteine 98 to cysteine 193. Glycine 121 is an ATP binding site. Residues 143 to 145 (KDQ) are interaction with tRNA. The active-site Cysteine persulfide intermediate is the cysteine 193.

The protein belongs to the MnmA/TRMU family.

It localises to the cytoplasm. The catalysed reaction is S-sulfanyl-L-cysteinyl-[protein] + uridine(34) in tRNA + AH2 + ATP = 2-thiouridine(34) in tRNA + L-cysteinyl-[protein] + A + AMP + diphosphate + H(+). Its function is as follows. Catalyzes the 2-thiolation of uridine at the wobble position (U34) of tRNA, leading to the formation of s(2)U34. The protein is tRNA-specific 2-thiouridylase MnmA of Parabacteroides distasonis (strain ATCC 8503 / DSM 20701 / CIP 104284 / JCM 5825 / NCTC 11152).